Consider the following 362-residue polypeptide: Adenosine deaminase (362 aa).

Residues histidine 41 and histidine 43 each coordinate Zn(2+). Residue histidine 43–aspartate 45 participates in a purine D-ribonucleoside binding. Residues isoleucine 169 to alanine 183 form a gating helix loop; regulates binding affinity for substrates and thus substrate selectivity region. Residue glycine 200 coordinates a purine D-ribonucleoside. Position 225 (histidine 225) interacts with Zn(2+). A purine D-ribonucleoside is bound by residues glutamate 228, histidine 252, and aspartate 309. Aspartate 309 is a binding site for Zn(2+).

The protein belongs to the metallo-dependent hydrolases superfamily. Adenosine and AMP deaminases family. Zn(2+) serves as cofactor.

It catalyses the reaction adenosine + H2O + H(+) = inosine + NH4(+). Its pathway is purine metabolism; purine nucleoside salvage. Its activity is regulated as follows. Inhibited by coformycin but not by methylthiocoformycin (MT-coformycin). Functionally, catalyzes the hydrolytic deamination of adenosine to produce inosine. Unlike other Plasmodium adenosine deaminases, does not catalyze the deamination of 5'-methylthioadenosine (MTA). Plays an essential role in the purine salvage pathway which allows the parasite to use host cell purines for the synthesis of nucleic acids. In Plasmodium gallinaceum, this protein is Adenosine deaminase.